Here is a 98-residue protein sequence, read N- to C-terminus: NADH-ubiquinone oxidoreductase chain 4L (98 aa).

Helical transmembrane passes span 2–22 (PSIF…TLVF), 29–49 (SLLC…LIIL), and 61–81 (ILLL…LVMV).

This sequence belongs to the complex I subunit 4L family. As to quaternary structure, core subunit of respiratory chain NADH dehydrogenase (Complex I) which is composed of 45 different subunits.

Its subcellular location is the mitochondrion inner membrane. The catalysed reaction is a ubiquinone + NADH + 5 H(+)(in) = a ubiquinol + NAD(+) + 4 H(+)(out). Functionally, core subunit of the mitochondrial membrane respiratory chain NADH dehydrogenase (Complex I) which catalyzes electron transfer from NADH through the respiratory chain, using ubiquinone as an electron acceptor. Part of the enzyme membrane arm which is embedded in the lipid bilayer and involved in proton translocation. The sequence is that of NADH-ubiquinone oxidoreductase chain 4L (MT-ND4L) from Avahi laniger (Eastern woolly lemur).